The primary structure comprises 72 residues: Small ribosomal subunit protein bS18 (72 aa).

The protein belongs to the bacterial ribosomal protein bS18 family. Part of the 30S ribosomal subunit. Forms a tight heterodimer with protein bS6.

Functionally, binds as a heterodimer with protein bS6 to the central domain of the 16S rRNA, where it helps stabilize the platform of the 30S subunit. This chain is Small ribosomal subunit protein bS18, found in Francisella tularensis subsp. holarctica (strain OSU18).